The sequence spans 273 residues: MAIVKCKPTSAGRRFVVKVVNQELHKGAPYAPLLEKKSKSGGRNNNGRITTRHIGGGHKQHYRLVDFRRNKDGIPAIVERVEYDPNRTAHIALLKYADGERRYIIAPKGVAAGDQLISGIGAPIKAGNSMPLRNIPVGSTVHGIELKPGKGAQIARSAGASAQLVAREGAYVTLRLRSGEMRKVLAECRATLGEVSNSEHSLRSLGKAGATRWRGVRPTVRGVAMNPVDHPHGGGEGRTSAGRHPVSPWGLQTKGKKTRSNKRTDNMIVRRRK.

2 disordered regions span residues 34 to 54 (LEKK…TRHI) and 223 to 273 (VAMN…RRRK).

This sequence belongs to the universal ribosomal protein uL2 family. Part of the 50S ribosomal subunit. Forms a bridge to the 30S subunit in the 70S ribosome.

One of the primary rRNA binding proteins. Required for association of the 30S and 50S subunits to form the 70S ribosome, for tRNA binding and peptide bond formation. It has been suggested to have peptidyltransferase activity; this is somewhat controversial. Makes several contacts with the 16S rRNA in the 70S ribosome. This is Large ribosomal subunit protein uL2 from Pseudomonas aeruginosa (strain LESB58).